Here is a 400-residue protein sequence, read N- to C-terminus: Axin-like protein 1 (400 aa).

Residues 4 to 132 (RSKFSIDRVL…TTTADVNTTW (129 aa)) enclose the RGS domain. Disordered regions lie at residues 190-233 (QETK…TLKV) and 278-306 (GTLERPNRLFTGTNNGFSTLQPKRRGSEA). Residues 194 to 210 (NSSETEEHAESPRKEKS) show a composition bias toward basic and acidic residues. The segment covering 287–298 (FTGTNNGFSTLQ) has biased composition (polar residues). A DIX domain is found at 305 to 392 (EAPKMTVELR…RITAICRMCP (88 aa)).

Interacts with bar-1, dsh-2, gsk-3, and mig-5.

Its function is as follows. Works in parallel with pry-1 in negatively regulating bar-1 signaling in vulval precursor cells and Q neuroblasts. Shown to have a role in excretory cell development. The chain is Axin-like protein 1 from Caenorhabditis elegans.